The following is a 416-amino-acid chain: MKAISVLGSTGSIGTQTLAIVEDFPDQFRVVALSAGRNLSLLVSQIQRHRPDVVALADQALLAELKDRLMALPADTRPEPLPHLVGGPEGLDVVASWDSADLVVTGIVGCAGLLPTLAAIRAGKDLAVANKETLIAAGPVVLPELKKSGSRLLPADSEHSAIFQCLQGTPWSDTARLSTGVPTPGLRRIQLTASGGAFRDWSAADLEKATVADATSHPNWSMGKKITVDSASLMNKGLEVIEAHYLFGLDYDHIEIVIHPQSIIHSMVELADSSVLAQLGWPDMKLPILYCMSWPSRLETPWRRLDLTEVGQLSFRAPDPAKYPCMDLAYAAGRAGGTMPAVLNAANEEAVAQFLEEKIHFLDIPKMIEGACEQHKPDLAANPCLDDVLAVDQWARQAVREQVNRGTRLRGASMAA.

NADPH is bound by residues threonine 10, glycine 11, serine 12, isoleucine 13, glycine 36, arginine 37, asparagine 38, and asparagine 130. Residue lysine 131 participates in 1-deoxy-D-xylulose 5-phosphate binding. Glutamate 132 is a binding site for NADPH. Aspartate 156 contacts Mn(2+). Residues serine 157, glutamate 158, serine 194, and histidine 217 each contribute to the 1-deoxy-D-xylulose 5-phosphate site. Glutamate 158 is a binding site for Mn(2+). Residue glycine 223 coordinates NADPH. Serine 230, asparagine 235, lysine 236, and glutamate 239 together coordinate 1-deoxy-D-xylulose 5-phosphate. Glutamate 239 is a Mn(2+) binding site.

It belongs to the DXR family. Mg(2+) serves as cofactor. It depends on Mn(2+) as a cofactor.

It carries out the reaction 2-C-methyl-D-erythritol 4-phosphate + NADP(+) = 1-deoxy-D-xylulose 5-phosphate + NADPH + H(+). It functions in the pathway isoprenoid biosynthesis; isopentenyl diphosphate biosynthesis via DXP pathway; isopentenyl diphosphate from 1-deoxy-D-xylulose 5-phosphate: step 1/6. Functionally, catalyzes the NADPH-dependent rearrangement and reduction of 1-deoxy-D-xylulose-5-phosphate (DXP) to 2-C-methyl-D-erythritol 4-phosphate (MEP). This chain is 1-deoxy-D-xylulose 5-phosphate reductoisomerase, found in Synechococcus sp. (strain CC9311).